The following is a 318-amino-acid chain: MFMINVLLLIVPILLAVAFLTLVERKVLGYMQLRKGPNIVGPYGLLQPIADALKLFIKEPLQPLTSSTSMFIIAPILALTLALTMWIPLPMPYPLINMNLGILFMLAMSSLAVYSILWSGWASNSKYALIGALRAVAQTISYEVTLAIILLSVLLMSGSFTLSTLIITQEYLWLIFPSWPLAMMWFISTLAETNRAPFDLTEGESELVSGFNVEYAAGPFALFFLAEYANIIMMNIFTTTLFLGAFHNPYLPELYSINFTIKALLLTCSFLWIRASYPRFRYDQLMHLLWKNFLPLTLALCMWHVSLPIMLSSIPPQT.

A run of 8 helical transmembrane segments spans residues 2-22, 70-90, 100-120, 147-167, 171-191, 217-237, 253-273, and 294-314; these read FMIN…FLTL, MFII…IPLP, LGIL…LWSG, AIIL…TLII, YLWL…STLA, AGPF…MNIF, ELYS…FLWI, and LPLT…LSSI.

Belongs to the complex I subunit 1 family. In terms of assembly, core subunit of respiratory chain NADH dehydrogenase (Complex I) which is composed of 45 different subunits.

It is found in the mitochondrion inner membrane. It carries out the reaction a ubiquinone + NADH + 5 H(+)(in) = a ubiquinol + NAD(+) + 4 H(+)(out). In terms of biological role, core subunit of the mitochondrial membrane respiratory chain NADH dehydrogenase (Complex I) which catalyzes electron transfer from NADH through the respiratory chain, using ubiquinone as an electron acceptor. Essential for the catalytic activity and assembly of complex I. The sequence is that of NADH-ubiquinone oxidoreductase chain 1 (MT-ND1) from Equus caballus (Horse).